A 248-amino-acid polypeptide reads, in one-letter code: Protein canopy homolog 4 (248 aa).

The signal sequence occupies residues 1–21 (MGPVRLGILLFLFLAVHEAWA). 3 disulfide bridges follow: Cys38-Cys196, Cys41-Cys184, and Cys94-Cys156. The disordered stretch occupies residues 200 to 248 (TWTGKEITDGEEKTEGEEEQEEEEEEEEEEGGDKMTKTGSHPKLDREDL). The span at 213-230 (TEGEEEQEEEEEEEEEEG) shows a compositional bias: acidic residues. Residues 231 to 248 (GDKMTKTGSHPKLDREDL) are compositionally biased toward basic and acidic residues.

This sequence belongs to the canopy family. Interacts with TLR4.

It localises to the secreted. Functionally, plays a role in the regulation of the cell surface expression of TLR4. The chain is Protein canopy homolog 4 (CNPY4) from Homo sapiens (Human).